Here is a 229-residue protein sequence, read N- to C-terminus: Ribonuclease T (229 aa).

Residues 23 to 197 (VIIDVETAGF…YDTERTAKLF (175 aa)) enclose the Exonuclease domain. Residues aspartate 26, glutamate 28, histidine 184, and aspartate 189 each coordinate Mg(2+). Histidine 184 acts as the Proton donor/acceptor in catalysis.

The protein belongs to the RNase T family. Homodimer. The cofactor is Mg(2+).

Its function is as follows. Trims short 3' overhangs of a variety of RNA species, leaving a one or two nucleotide 3' overhang. Responsible for the end-turnover of tRNA: specifically removes the terminal AMP residue from uncharged tRNA (tRNA-C-C-A). Also appears to be involved in tRNA biosynthesis. This Haemophilus influenzae (strain ATCC 51907 / DSM 11121 / KW20 / Rd) protein is Ribonuclease T.